Here is a 120-residue protein sequence, read N- to C-terminus: U13-lycotoxin-Ls1d (120 aa).

Positions 1–16 (MKILFVLISILYAVYC) are cleaved as a signal peptide. Residues 17–54 (FSSEEDVDSAYLANELEPVEDINSEQYAALEPKEEQER) constitute a propeptide that is removed on maturation. 4 cysteine pairs are disulfide-bonded: C56/C70, C63/C76, C69/C87, and C78/C85. Residues 56 to 95 (CADMGQDCKDDCDCCLNIATCNCRFGRYFCSCTFGDYQTC) form the Agouti domain.

This sequence belongs to the neurotoxin 05 (agouti) family. Post-translationally, contains 6 disulfide bonds. In terms of tissue distribution, expressed by the venom gland.

Its subcellular location is the secreted. The sequence is that of U13-lycotoxin-Ls1d from Lycosa singoriensis (Wolf spider).